Consider the following 688-residue polypeptide: PHD finger protein 21A (688 aa).

A Glycyl lysine isopeptide (Lys-Gly) (interchain with G-Cter in SUMO2) cross-link involves residue lysine 65. 2 disordered regions span residues 78–127 and 327–373; these read SQSE…LTAS and PQTV…ENPQ. Residues 85 to 127 show a composition bias toward low complexity; sequence QTAQQQPLQPLQQQQPQQPQQQQQQQQQHAQQSAAAPPSLTAS. Over residues 336–354 the composition is skewed to basic and acidic residues; that stretch reads SLEKQTVKSHPEAEEKQAE. A DNA-binding region (a.T hook) is located at residues 434–446; sequence TRKRGRPPKYNAV. Residues 449–471 are disordered; the sequence is FGALTPTSPPSSHPDSPENEKTE. Residue threonine 453 is modified to Phosphothreonine. Serine 456 bears the Phosphoserine mark. The PHD-type zinc-finger motif lies at 497–544; it reads EDFCSVCRKSGQLLMCDTCSRVYHLDCLEPPLKTIPKGMWICPRCQDQ. Positions 571-609 form a coiled coil; sequence KEEEKQKLLKWSSDLKQEREQLEQKVKELSSSISKCMEM. The tract at residues 650–688 is disordered; sequence GALSNGPDCTPPANAASTPAPSPSSQSCTANCNQGEETK. The segment covering 660–679 has biased composition (low complexity); sequence PPANAASTPAPSPSSQSCTA.

In terms of assembly, component of a BHC histone deacetylase complex that contains HDAC1, HDAC2, HMG20B/BRAF35, KDM1A, RCOR1/CoREST and PHF21A/BHC80. The BHC complex may also contain ZMYM2, ZNF217, ZMYM3, GSE1 and GTF2I. In the complex, it interacts directly with HDAC1, HDAC2, HMG20B/BRAF35, KDM1A and RCOR1/CoREST. In terms of tissue distribution, expressed in the brain and testis. Weakly or not expressed in other tissues tested. Localized throughout the central nervous system (CNS) in brain, including the cerebellum, hippocampus, and cortex. Notably present in neuronal cells of granular cell layer and dentate gyrus in cerebellum and hippocampus, respectively. In the seminiferous tubules, the signals it is present strongly in spermatocytes, and weakly in spermatogonia and round spermatids. In some cases, it is also observed solely in spermatocytes (at protein level).

The protein resides in the nucleus. Its function is as follows. Component of the BHC complex, a corepressor complex that represses transcription of neuron-specific genes in non-neuronal cells. The BHC complex is recruited at RE1/NRSE sites by REST and acts by deacetylating and demethylating specific sites on histones, thereby acting as a chromatin modifier. In the BHC complex, it may act as a scaffold. Inhibits KDM1A-mediated demethylation of 'Lys-4' of histone H3 in vitro, suggesting a role in demethylation regulation. This chain is PHD finger protein 21A, found in Mus musculus (Mouse).